A 346-amino-acid chain; its full sequence is Hydroxyproline O-galactosyltransferase HPGT3 (346 aa).

The segment covering 1 to 10 has biased composition (polar residues); it reads MESLPTTVPS. The disordered stretch occupies residues 1 to 21; it reads MESLPTTVPSKSERRARSSKF. Over 1 to 28 the chain is Cytoplasmic; it reads MESLPTTVPSKSERRARSSKFSQSSSKP. The helical; Signal-anchor for type II membrane protein transmembrane segment at 29-45 threads the bilayer; the sequence is SVIMAFFSCVAWLYVAG. The Lumenal portion of the chain corresponds to 46–346; sequence RLWQDAENRV…IRQDKVCSVA (301 aa).

Belongs to the glycosyltransferase 31 family. The cofactor is Mn(2+). In terms of tissue distribution, expressed in roots, rosette leaves, cauline leaves, stems, flowers and siliques.

It localises to the golgi apparatus membrane. The protein operates within protein modification; protein glycosylation. Its function is as follows. Possesses hydroxyproline O-galactosyltransferase activity. Transfers galactose from UDP-galactose to hydroxyproline residues in the arabinogalactan proteins (AGPs). Is specific for AGPs containing non-contiguous peptidyl hydroxyproline residues. The addition of galactose onto the peptidyl hydroxyproline residues in AGP core proteins represents the first committed step in arabinogalactan polysaccharide addition. AGP glycans play essential roles in both vegetative and reproductive plant growth. This Arabidopsis thaliana (Mouse-ear cress) protein is Hydroxyproline O-galactosyltransferase HPGT3.